The following is a 274-amino-acid chain: 2-dehydro-3-deoxyphosphooctonate aldolase (274 aa).

It belongs to the KdsA family.

Its subcellular location is the cytoplasm. It catalyses the reaction D-arabinose 5-phosphate + phosphoenolpyruvate + H2O = 3-deoxy-alpha-D-manno-2-octulosonate-8-phosphate + phosphate. It participates in carbohydrate biosynthesis; 3-deoxy-D-manno-octulosonate biosynthesis; 3-deoxy-D-manno-octulosonate from D-ribulose 5-phosphate: step 2/3. It functions in the pathway bacterial outer membrane biogenesis; lipopolysaccharide biosynthesis. This is 2-dehydro-3-deoxyphosphooctonate aldolase from Rickettsia bellii (strain OSU 85-389).